The primary structure comprises 92 residues: Small ribosomal subunit protein bS18 (92 aa).

The protein belongs to the bacterial ribosomal protein bS18 family. As to quaternary structure, part of the 30S ribosomal subunit. Forms a tight heterodimer with protein bS6.

Functionally, binds as a heterodimer with protein bS6 to the central domain of the 16S rRNA, where it helps stabilize the platform of the 30S subunit. This Cupriavidus necator (strain ATCC 17699 / DSM 428 / KCTC 22496 / NCIMB 10442 / H16 / Stanier 337) (Ralstonia eutropha) protein is Small ribosomal subunit protein bS18.